The sequence spans 812 residues: DNA translocase FtsK 1 (812 aa).

Residues 1–11 show a composition bias toward basic residues; the sequence is MTEKSHKKTAK. The interval 1–36 is disordered; that stretch reads MTEKSHKKTAKGRAGSPSPTSARNKKADNGARGNKV. The segment covering 25–36 has biased composition (basic and acidic residues); sequence KKADNGARGNKV. 5 helical membrane-spanning segments follow: residues 63–83, 116–136, 156–176, 184–204, and 210–230; these read IGDA…ISLI, VGYY…CVVL, IAAA…YFVL, LPVG…AWLL, and LLII…ISWL. Topologically, residues 231–812 are cytoplasmic; sequence EFLNGAGRAV…RKILAHKDHL (582 aa). Positions 461 to 670 constitute a FtsK domain; it reads GTPVVGDLAK…FTVQSKIDSR (210 aa). Residue 481 to 486 participates in ATP binding; that stretch reads GSGKSV.

Belongs to the FtsK/SpoIIIE/SftA family. Homohexamer. Forms a ring that surrounds DNA.

Its subcellular location is the cell inner membrane. Functionally, essential cell division protein that coordinates cell division and chromosome segregation. The N-terminus is involved in assembly of the cell-division machinery. The C-terminus functions as a DNA motor that moves dsDNA in an ATP-dependent manner towards the dif recombination site, which is located within the replication terminus region. Translocation stops specifically at Xer-dif sites, where FtsK interacts with the Xer recombinase, allowing activation of chromosome unlinking by recombination. FtsK orienting polar sequences (KOPS) guide the direction of DNA translocation. FtsK can remove proteins from DNA as it translocates, but translocation stops specifically at XerCD-dif site, thereby preventing removal of XerC and XerD from dif. The chain is DNA translocase FtsK 1 (ftsK1) from Neisseria meningitidis serogroup B (strain ATCC BAA-335 / MC58).